A 151-amino-acid polypeptide reads, in one-letter code: Small ribosomal subunit protein uS15 (151 aa).

It belongs to the universal ribosomal protein uS15 family.

This chain is Small ribosomal subunit protein uS15 (RpS13), found in Spodoptera frugiperda (Fall armyworm).